Consider the following 517-residue polypeptide: MNSTEVDNLPFQQQLTSFVELAVAKATGSPITTLFTIIFLILSYDQLSYQINKGSIAGPRFKFYPIIGPFLESLDPKFEEYKAKWDSGELSCVSIFHKFVVIASSRDLARKILSSPKYVKPCVVDVAIKILRPTNWVFLDGKQHTDYRRSLNGLFSSKALEIYIPVQEKYMDIYLERFCKYDGPREFFPEFRELLCALSLRTFCGDYITEDQIALVADNYYRVTAALELVNFPIIIPYTKTWYGKKIADDTMKIFENCAAMAKKHINENNGTPKCVMDEWIHLMKEAREKHSEDPDSKLLVREFSNREISEAIFTFLFASQDASSSLACWLFQIVADRPDIVAKIREEQLRVRNNNPDVRLSLDLINEMTYTNNVVKESLRYRPPVLMVPYVVKKSFPVTESYTAPKGAMIIPTLYPALHDPEVYDEPDSFIPERWENASGDMYKRNWLVFGTGPHVCLGKNYVLMLFTGMLGKFVMNSDMIHHKTDLSEEIKVFATIFPKDDLILEWKKRDPLKSL.

The chain crosses the membrane as a helical span at residues 21–41 (LAVAKATGSPITTLFTIIFLI). Cys-458 serves as a coordination point for heme.

It belongs to the cytochrome P450 family. It depends on heme as a cofactor.

The protein localises to the endoplasmic reticulum membrane. The enzyme catalyses 5-dehydroepisterol + NADPH + O2 + H(+) = ergosta-5,7,22,24(28)-tetraen-3beta-ol + NADP(+) + 2 H2O. The protein operates within steroid metabolism; ergosterol biosynthesis; ergosterol from zymosterol: step 4/5. Its function is as follows. C-22 sterol desaturase; part of the third module of ergosterol biosynthesis pathway that includes the late steps of the pathway. ERG5 converts 5-dehydroepisterol into ergosta-5,7,22,24(28)-tetraen-3beta-ol by forming the C-22(23) double bond in the sterol side chain. The third module or late pathway involves the ergosterol synthesis itself through consecutive reactions that mainly occur in the endoplasmic reticulum (ER) membrane. Firstly, the squalene synthase ERG9 catalyzes the condensation of 2 farnesyl pyrophosphate moieties to form squalene, which is the precursor of all steroids. Squalene synthase is crucial for balancing the incorporation of farnesyl diphosphate (FPP) into sterol and nonsterol isoprene synthesis. Secondly, the squalene epoxidase ERG1 catalyzes the stereospecific oxidation of squalene to (S)-2,3-epoxysqualene, which is considered to be a rate-limiting enzyme in steroid biosynthesis. Then, the lanosterol synthase ERG7 catalyzes the cyclization of (S)-2,3 oxidosqualene to lanosterol, a reaction that forms the sterol core. In the next steps, lanosterol is transformed to zymosterol through a complex process involving various demethylation, reduction and desaturation reactions. The lanosterol 14-alpha-demethylase ERG11 (also known as CYP51) catalyzes C14-demethylation of lanosterol to produce 4,4'-dimethyl cholesta-8,14,24-triene-3-beta-ol, which is critical for ergosterol biosynthesis. The C-14 reductase ERG24 reduces the C14=C15 double bond of 4,4-dimethyl-cholesta-8,14,24-trienol to produce 4,4-dimethyl-cholesta-8,24-dienol. 4,4-dimethyl-cholesta-8,24-dienol is substrate of the C-4 demethylation complex ERG25-ERG26-ERG27 in which ERG25 catalyzes the three-step monooxygenation required for the demethylation of 4,4-dimethyl and 4alpha-methylsterols, ERG26 catalyzes the oxidative decarboxylation that results in a reduction of the 3-beta-hydroxy group at the C-3 carbon to an oxo group, and ERG27 is responsible for the reduction of the keto group on the C-3. ERG28 has a role as a scaffold to help anchor ERG25, ERG26 and ERG27 to the endoplasmic reticulum and ERG29 regulates the activity of the iron-containing C4-methylsterol oxidase ERG25. Then, the sterol 24-C-methyltransferase ERG6 catalyzes the methyl transfer from S-adenosyl-methionine to the C-24 of zymosterol to form fecosterol. The C-8 sterol isomerase ERG2 catalyzes the reaction which results in unsaturation at C-7 in the B ring of sterols and thus converts fecosterol to episterol. The sterol-C5-desaturase ERG3 then catalyzes the introduction of a C-5 double bond in the B ring to produce 5-dehydroepisterol. The C-22 sterol desaturase ERG5 further converts 5-dehydroepisterol into ergosta-5,7,22,24(28)-tetraen-3beta-ol by forming the C-22(23) double bond in the sterol side chain. Finally, ergosta-5,7,22,24(28)-tetraen-3beta-ol is substrate of the C-24(28) sterol reductase ERG4 to produce ergosterol. This is C-22 sterol desaturase ERG5 from Candida albicans (strain SC5314 / ATCC MYA-2876) (Yeast).